A 269-amino-acid chain; its full sequence is Hdr-like menaquinol oxidoreductase iron-sulfur subunit 1 (269 aa).

Residues 1 to 26 (MMSRRKFLLLTGAAAAGAILTPQISA) constitute a signal peptide (tat-type signal). [4Fe-4S] cluster contacts are provided by C52, C55, C72, C76, C118, C121, C126, C130, C150, C153, C156, C160, C194, C197, C215, and C219. Positions 141-170 (GIVEIDMHRCIGCRYCMIACPYGARCFNFI) constitute a 4Fe-4S ferredoxin-type domain.

Consists of five subunits: an integral membrane subunit, a cytochrome b-like subunit, a cytochrome c subunit and two iron-sulfur subunits. [4Fe-4S] cluster serves as cofactor. In terms of processing, predicted to be exported by the Tat system. The position of the signal peptide cleavage has been experimentally proven.

The protein localises to the cell membrane. Has menaquinol-oxidizing activity. HmeA, HmeB and HmeE subunits may together catalyze electron transfer from menaquinol to cytochrome c. The chain is Hdr-like menaquinol oxidoreductase iron-sulfur subunit 1 (hmeA) from Archaeoglobus fulgidus (strain ATCC 49558 / DSM 4304 / JCM 9628 / NBRC 100126 / VC-16).